Reading from the N-terminus, the 549-residue chain is CTP synthase (549 aa).

The segment at 1–272 is amidoligase domain; the sequence is MPPKSSTTKH…DAYVVRRMDL (272 aa). CTP is bound at residue serine 19. Serine 19 is a UTP binding site. ATP-binding positions include 20 to 25 and aspartate 77; that span reads SLGKGL. Residues aspartate 77 and glutamate 146 each contribute to the Mg(2+) site. Residues 153 to 155, 193 to 198, and lysine 229 contribute to the CTP site; these read DIE and KTKPTQ. Residues 193 to 198 and lysine 229 contribute to the UTP site; that span reads KTKPTQ. The 248-residue stretch at 301–548 folds into the Glutamine amidotransferase type-1 domain; sequence VGKYIDLPDA…VKAAVERKTS (248 aa). Glycine 360 lines the L-glutamine pocket. Cysteine 387 acts as the Nucleophile; for glutamine hydrolysis in catalysis. Residues 388 to 391, glutamate 411, and arginine 473 contribute to the L-glutamine site; that span reads LGLQ. Catalysis depends on residues histidine 521 and glutamate 523.

It belongs to the CTP synthase family. In terms of assembly, homotetramer.

It carries out the reaction UTP + L-glutamine + ATP + H2O = CTP + L-glutamate + ADP + phosphate + 2 H(+). It catalyses the reaction L-glutamine + H2O = L-glutamate + NH4(+). The enzyme catalyses UTP + NH4(+) + ATP = CTP + ADP + phosphate + 2 H(+). It functions in the pathway pyrimidine metabolism; CTP biosynthesis via de novo pathway; CTP from UDP: step 2/2. Its activity is regulated as follows. Allosterically activated by GTP, when glutamine is the substrate; GTP has no effect on the reaction when ammonia is the substrate. The allosteric effector GTP functions by stabilizing the protein conformation that binds the tetrahedral intermediate(s) formed during glutamine hydrolysis. Inhibited by the product CTP, via allosteric rather than competitive inhibition. Its function is as follows. Catalyzes the ATP-dependent amination of UTP to CTP with either L-glutamine or ammonia as the source of nitrogen. Regulates intracellular CTP levels through interactions with the four ribonucleotide triphosphates. The polypeptide is CTP synthase (Streptomyces coelicolor (strain ATCC BAA-471 / A3(2) / M145)).